A 34-amino-acid polypeptide reads, in one-letter code: Mu-theraphotoxin-Pspp1 (34 aa).

Disulfide bonds link cysteine 2-cysteine 17, cysteine 9-cysteine 22, and cysteine 16-cysteine 29. Phenylalanine 34 carries the phenylalanine amide modification.

It belongs to the neurotoxin 10 (Hwtx-1) family. As to expression, expressed by the venom gland.

The protein localises to the secreted. Its function is as follows. Voltage-gated sodium channel inhibitor. It is unclear if it selectively inhibits Nav1.7/SCN9A or shows similar potency on all sodium channels tested. According to Escoubas et al., 2006 and Nicolas et al., 2019, it is selective over Nav1.7/SCN9A (90% inhibition at 1 uM), versus Nav1.4 and Nav1.6 (35% inhibition), and shows a small inhibition on all other sodium channels (except Nav1.8/SCN10A). According to Goncalves et al., 2019, it shows a similar inhibition on almost all sodium channels tested (Nav1.1/SCN1A (IC(50)=280.3 nM), Nav1.2/SCN2A (IC(50)=73.7 nM), Nav1.3/SCN3A (IC(50)=201.5 nM), Nav1.4/SCN4A (IC(50)&gt;2100 nM), Nav1.5/SCN5A (IC(50)=710.6 nM), Nav1.6/SCN8A (IC(50)=491.2 nM), and Nav1.7/SCN9A (IC(50)=254.3-260 nM)), except Nav1.8/SCN10A. The voltage-dependence of steady-state Nav1.7/SCN9A channel activation and inactivation are not affected, suggesting that is does not act as a gating-modifier toxin but rather blocks or impedes ion flux through the channel pore. The toxin effect is partial and poorly reversible. In addition to its inhibition to sodium channels, it also shows a small inhibition on rat Kv3.4/KCNC4 potassium channels (20% inhibition at 1 uM). In vivo, when tested on pain models, it shows analgesic activity. In Phlogiellus sp. (Tarantula), this protein is Mu-theraphotoxin-Pspp1.